The following is a 515-amino-acid chain: Vacuolar fusion protein CCZ1 homolog A (515 aa).

Belongs to the CCZ1 family. In terms of assembly, interacts with MON1.

It is found in the endosome. It localises to the prevacuolar compartment. Functionally, plays an important role in membrane trafficking through the secretory apparatus. In complex with MON1, acts as a guanine exchange factor (GEF) for RABG3F of the Rab7 protein family. Promotes the exchange of GDP to GTP, converting RABG3F from an inactive GDP-bound form into an active GTP-bound form. The RABG3F active form is involved in protein trafficking from prevacuolar compartments (PVCs) to vacuoles. May serve as a linker between Rab5 and Rab7 protein families in PVCs and mediate PVC maturation. This is Vacuolar fusion protein CCZ1 homolog A from Arabidopsis thaliana (Mouse-ear cress).